The following is a 430-amino-acid chain: Histidinol dehydrogenase (430 aa).

The NAD(+) site is built by tyrosine 130, glutamine 191, and asparagine 214. Substrate-binding residues include serine 237, glutamine 259, and histidine 262. Zn(2+) is bound by residues glutamine 259 and histidine 262. Active-site proton acceptor residues include glutamate 327 and histidine 328. Residues histidine 328, aspartate 361, glutamate 415, and histidine 420 each coordinate substrate. Zn(2+) is bound at residue aspartate 361. Position 420 (histidine 420) interacts with Zn(2+).

The protein belongs to the histidinol dehydrogenase family. The cofactor is Zn(2+).

The enzyme catalyses L-histidinol + 2 NAD(+) + H2O = L-histidine + 2 NADH + 3 H(+). It participates in amino-acid biosynthesis; L-histidine biosynthesis; L-histidine from 5-phospho-alpha-D-ribose 1-diphosphate: step 9/9. Its function is as follows. Catalyzes the sequential NAD-dependent oxidations of L-histidinol to L-histidinaldehyde and then to L-histidine. The chain is Histidinol dehydrogenase from Brucella melitensis biotype 1 (strain ATCC 23456 / CCUG 17765 / NCTC 10094 / 16M).